A 400-amino-acid polypeptide reads, in one-letter code: Nicotinate phosphoribosyltransferase (400 aa).

H220 carries the phosphohistidine; by autocatalysis modification.

It belongs to the NAPRTase family. Post-translationally, transiently phosphorylated on a His residue during the reaction cycle. Phosphorylation strongly increases the affinity for substrates and increases the rate of nicotinate D-ribonucleotide production. Dephosphorylation regenerates the low-affinity form of the enzyme, leading to product release.

The enzyme catalyses nicotinate + 5-phospho-alpha-D-ribose 1-diphosphate + ATP + H2O = nicotinate beta-D-ribonucleotide + ADP + phosphate + diphosphate. The protein operates within cofactor biosynthesis; NAD(+) biosynthesis; nicotinate D-ribonucleotide from nicotinate: step 1/1. In terms of biological role, catalyzes the synthesis of beta-nicotinate D-ribonucleotide from nicotinate and 5-phospho-D-ribose 1-phosphate at the expense of ATP. This is Nicotinate phosphoribosyltransferase from Citrobacter koseri (strain ATCC BAA-895 / CDC 4225-83 / SGSC4696).